The sequence spans 414 residues: Aspartic protease-like protein pynH (414 aa).

The signal sequence occupies residues 1–19; it reads MFPCSRIWSLLVAAATASA. Positions 43 to 410 constitute a Peptidase A1 domain; the sequence is FLTDIALGTP…DFEKLQVGIA (368 aa). N-linked (GlcNAc...) asparagine glycosylation is found at Asn-93, Asn-102, Asn-140, Asn-151, Asn-173, Asn-202, Asn-221, Asn-258, Asn-272, Asn-335, and Asn-366. Cys-333 and Cys-371 are oxidised to a cystine.

Belongs to the peptidase A1 family.

It functions in the pathway secondary metabolite biosynthesis. In terms of biological role, aspartic protease-like protein; part of the gene cluster that mediates the biosynthesis of pyranonigrins, a family of antioxidative compounds. The first step of pyranonigrins biosynthesis is performed by the hybrid PKS-NRPS synthetase that condenses 6 malonyl-CoA units to an acetyl starter unit, to form a 1,3,5-trioxotetradecane-6,8-dienyl-ACP. The enoyl reductase (ER) domain of pynA is likely to be functional during the first two rounds of polyketide chain extension, to generate the saturated C-C bonds of the alkyl side chain. PynA subsequently forms the amide bond between the acyl chain and L-serine. Although pynA has a terminal reductase domain, it appears to require the thioesterase pynI for the release of the straight-chain intermediate from pynA via the formation of a tetramic acid pyranonigrin J. The methyltransferase pynC then coverts pyranonigrin J to pyranonigrin I via N-methylation. The FAD-dependent monooxygenase pynG catalyzes an epoxidation-mediated cyclization to form the dihydro-gamma-pyrone moiety, followed by pynD-catalyzed oxidation of the alcohol to the ketone and enolization to yield the characteristic tetramic acid-fused gamma-pyrone core of pyranonigrin H. Pyranonigrin H is substrate of pynH for dehydration-mediated exo-methylene formation from the serine side chain to produce pyranonigrin E, before the oxidase pynE reduces the exo-methylene of pyranonigrin E into a pendant methyl to form pyranonigrin G. The FAD-linked oxidoreductase pynB performs the reverse reaction and converts pyranonigrin G back to pyranonigrin E. This chain is Aspartic protease-like protein pynH, found in Aspergillus niger (strain ATCC MYA-4892 / CBS 513.88 / FGSC A1513).